The primary structure comprises 181 residues: Malignant T-cell-amplified sequence 1 (181 aa).

Threonine 81 bears the Phosphothreonine; by MAPK1 and MAPK3 mark. Positions 92–171 (LPHQQVDKGA…IGIENIHYLN (80 aa)) constitute a PUA domain. The residue at position 118 (serine 118) is a Phosphoserine; by CDK1.

This sequence belongs to the MCTS1 family. In terms of assembly, interacts (via PUA domain) with DENR; the complex regulates translation reinitiation. Phosphorylation is critical for stabilization and promotion of cell proliferation. In terms of tissue distribution, ubiquitous. Over-expressed in T-cell lymphoid cell lines and in non-Hodgkin lymphoma cell lines as well as in a subset of primary large B-cell lymphomas.

Its subcellular location is the cytoplasm. Functionally, translation regulator forming a complex with DENR to promote translation reinitiation. Translation reinitiation is the process where the small ribosomal subunit remains attached to the mRNA following termination of translation of a regulatory upstream ORF (uORF), and resume scanning on the same mRNA molecule to initiate translation of a downstream ORF, usually the main ORF (mORF). The MCTS1/DENR complex is pivotal to two linked mechanisms essential for translation reinitiation. Firstly, the dissociation of deacylated tRNAs from post-termination 40S ribosomal complexes during ribosome recycling. Secondly, the recruitment in an EIF2-independent manner of aminoacylated initiator tRNA to P site of 40S ribosomes for a new round of translation. This regulatory mechanism governs the translation of more than 150 genes which translation reinitiation is MCTS1/DENR complex-dependent. Consequently, modulates various unrelated biological processes including cell cycle regulation and DNA damage signaling and repair. Notably, it positively regulates interferon gamma immunity to mycobacteria by enhancing the translation of JAK2. In Homo sapiens (Human), this protein is Malignant T-cell-amplified sequence 1 (MCTS1).